The sequence spans 327 residues: Dolichyl-phosphate beta-glucosyltransferase ALG5D (327 aa).

Residues 1–6 (MEKQLA) lie on the Lumenal side of the membrane. The helical transmembrane segment at 7–27 (ELSVYILIIFLILGFIMAILM) threads the bilayer. Topologically, residues 28–327 (RFGDDTTLFD…NIWTIRDRKF (300 aa)) are cytoplasmic.

Belongs to the glycosyltransferase 2 family.

It is found in the endoplasmic reticulum membrane. It carries out the reaction a di-trans,poly-cis-dolichyl phosphate + UDP-alpha-D-glucose = a di-trans,poly-cis-dolichyl beta-D-glucosyl phosphate + UDP. It participates in protein modification; protein glycosylation. In terms of biological role, dolichyl-phosphate beta-glucosyltransferase involved in the glycosylation of glycoproteins through the synthesis of dolichyl beta-D-glucosyl phosphate which serves as a sugar donor for transfer of three glucose residues to the Man-9-GlcNAc-2-PP-dolichol precursor to N-glycans. The sequence is that of Dolichyl-phosphate beta-glucosyltransferase ALG5D from Trichomonas vaginalis (strain ATCC PRA-98 / G3).